The primary structure comprises 531 residues: Inactive beta-amylase 4, chloroplastic (531 aa).

Residues 1–62 (MTETGVIGCG…KRGRFITKLR (62 aa)) constitute a chloroplast transit peptide.

Belongs to the glycosyl hydrolase 14 family. In terms of tissue distribution, preferentially expressed in vascular tissue of cotyledons, leaves, petioles, stems, petals, siliques and roots, particularly in phloem. Also present in root tip.

The protein resides in the plastid. It is found in the chloroplast. No alpha-1,4-glucan hydrolase activity, including beta-amylase, alpha-amylase, a-glucosidase or alpha-amyloglucosidase. However, facilitates or regulates starch breakdown, especially at night, by a mechanism involving direct interaction with starch or other alpha-1,4-glucan. This is Inactive beta-amylase 4, chloroplastic (BAM4) from Arabidopsis thaliana (Mouse-ear cress).